Here is a 332-residue protein sequence, read N- to C-terminus: Transaldolase (332 aa).

The active-site Schiff-base intermediate with substrate is the Lys136.

This sequence belongs to the transaldolase family. Type 1 subfamily.

The protein localises to the cytoplasm. It carries out the reaction D-sedoheptulose 7-phosphate + D-glyceraldehyde 3-phosphate = D-erythrose 4-phosphate + beta-D-fructose 6-phosphate. Its pathway is carbohydrate degradation; pentose phosphate pathway; D-glyceraldehyde 3-phosphate and beta-D-fructose 6-phosphate from D-ribose 5-phosphate and D-xylulose 5-phosphate (non-oxidative stage): step 2/3. Functionally, transaldolase is important for the balance of metabolites in the pentose-phosphate pathway. The protein is Transaldolase of Nostoc sp. (strain PCC 7120 / SAG 25.82 / UTEX 2576).